Here is a 163-residue protein sequence, read N- to C-terminus: Disulfide bond formation protein B (163 aa).

The Cytoplasmic portion of the chain corresponds to 1–9; the sequence is MRLASPRSL. The helical transmembrane segment at 10 to 26 threads the bilayer; that stretch reads FVIAFLGSALLIAIALY. Residues 27–44 are Periplasmic-facing; sequence MEHVMGLAPCPLCIVQRI. Residues C36 and C39 are joined by a disulfide bond. A helical membrane pass occupies residues 45 to 61; sequence CVIGFGLVCLVAAIHGP. Residues 62 to 67 are Cytoplasmic-facing; sequence AKVGRR. Residues 68 to 85 form a helical membrane-spanning segment; it reads VYAAIAALFVAAGAATAI. The Periplasmic segment spans residues 86–142; it reads RQIWLQSVPADQLPSCLPSLEYMMEALPFQEIARLVLHGTAECAEVSWTMLGMSIPE. Residues C101 and C128 are joined by a disulfide bond. A helical transmembrane segment spans residues 143-161; that stretch reads WSLLGFIGMAIVCLWQLLR. The Cytoplasmic segment spans residues 162-163; that stretch reads RD.

This sequence belongs to the DsbB family.

The protein localises to the cell inner membrane. Its function is as follows. Required for disulfide bond formation in some periplasmic proteins. Acts by oxidizing the DsbA protein. The protein is Disulfide bond formation protein B of Stutzerimonas stutzeri (strain A1501) (Pseudomonas stutzeri).